Reading from the N-terminus, the 252-residue chain is 5'-nucleotidase SurE (252 aa).

Residues aspartate 8, aspartate 9, serine 39, and asparagine 91 each contribute to the a divalent metal cation site.

The protein belongs to the SurE nucleotidase family. A divalent metal cation is required as a cofactor.

Its subcellular location is the cytoplasm. The enzyme catalyses a ribonucleoside 5'-phosphate + H2O = a ribonucleoside + phosphate. Functionally, nucleotidase that shows phosphatase activity on nucleoside 5'-monophosphates. This Geobacter metallireducens (strain ATCC 53774 / DSM 7210 / GS-15) protein is 5'-nucleotidase SurE.